A 279-amino-acid polypeptide reads, in one-letter code: 4-diphosphocytidyl-2-C-methyl-D-erythritol kinase (279 aa).

K9 is a catalytic residue. 93–103 (PMGAGLGGGSS) provides a ligand contact to ATP. Residue D135 is part of the active site.

This sequence belongs to the GHMP kinase family. IspE subfamily.

It catalyses the reaction 4-CDP-2-C-methyl-D-erythritol + ATP = 4-CDP-2-C-methyl-D-erythritol 2-phosphate + ADP + H(+). Its pathway is isoprenoid biosynthesis; isopentenyl diphosphate biosynthesis via DXP pathway; isopentenyl diphosphate from 1-deoxy-D-xylulose 5-phosphate: step 3/6. Functionally, catalyzes the phosphorylation of the position 2 hydroxy group of 4-diphosphocytidyl-2C-methyl-D-erythritol. In Acinetobacter baylyi (strain ATCC 33305 / BD413 / ADP1), this protein is 4-diphosphocytidyl-2-C-methyl-D-erythritol kinase.